Here is a 256-residue protein sequence, read N- to C-terminus: Astacin-like metalloprotease toxin 2 (256 aa).

An N-terminal signal peptide occupies residues 1 to 24 (MIPDVGFLVLLTGALFICIKAAPA). The propeptide occupies 25-52 (TTDVDPTFEGRIVMEGDILIREEQLTER). Positions 53–250 (NAIALENMRW…KKINTLYNCP (198 aa)) constitute a Peptidase M12A domain. Disulfide bonds link C94/C249 and C117/C136. H144 serves as a coordination point for Zn(2+). Residue E145 is part of the active site. Residues H148 and H154 each contribute to the Zn(2+) site.

In terms of assembly, monomer. Requires Zn(2+) as cofactor. In terms of tissue distribution, expressed by the venom gland.

Its subcellular location is the secreted. Its activity is regulated as follows. Inhibited by 1,10-phenanthroline. Its function is as follows. Zinc metalloprotease. Provoques deadhesion of endothelial cells from cell cultures, and also degradation of fibronectin, fibrinogen and gelatin in vitro. Its role in the venom is not fully understood but it might act as a spreading factor that facilitates diffusion of other venom toxins. Alternatively, it might be involved in the proteolytic processing of other venom toxins or it might play a role in extra-oral digestion of prey. This Loxosceles intermedia (Brown spider) protein is Astacin-like metalloprotease toxin 2.